A 335-amino-acid chain; its full sequence is Ketol-acid reductoisomerase (NADP(+)) (335 aa).

The KARI N-terminal Rossmann domain occupies 5–185 (SKIYTDKDSN…GATRAGVIPT (181 aa)). NADP(+) contacts are provided by residues 28 to 31 (YGSQ), serine 56, and 86 to 89 (DMVQ). Histidine 111 is an active-site residue. Glycine 137 lines the NADP(+) pocket. In terms of domain architecture, KARI C-terminal knotted spans 186–331 (TFKEETETDL…NQLKDLIQKG (146 aa)). Mg(2+)-binding residues include aspartate 194, glutamate 198, glutamate 230, and glutamate 234. Serine 255 contacts substrate.

The protein belongs to the ketol-acid reductoisomerase family. Mg(2+) is required as a cofactor.

The enzyme catalyses (2R)-2,3-dihydroxy-3-methylbutanoate + NADP(+) = (2S)-2-acetolactate + NADPH + H(+). The catalysed reaction is (2R,3R)-2,3-dihydroxy-3-methylpentanoate + NADP(+) = (S)-2-ethyl-2-hydroxy-3-oxobutanoate + NADPH + H(+). It participates in amino-acid biosynthesis; L-isoleucine biosynthesis; L-isoleucine from 2-oxobutanoate: step 2/4. It functions in the pathway amino-acid biosynthesis; L-valine biosynthesis; L-valine from pyruvate: step 2/4. Functionally, involved in the biosynthesis of branched-chain amino acids (BCAA). Catalyzes an alkyl-migration followed by a ketol-acid reduction of (S)-2-acetolactate (S2AL) to yield (R)-2,3-dihydroxy-isovalerate. In the isomerase reaction, S2AL is rearranged via a Mg-dependent methyl migration to produce 3-hydroxy-3-methyl-2-ketobutyrate (HMKB). In the reductase reaction, this 2-ketoacid undergoes a metal-dependent reduction by NADPH to yield (R)-2,3-dihydroxy-isovalerate. This Saccharolobus islandicus (strain L.S.2.15 / Lassen #1) (Sulfolobus islandicus) protein is Ketol-acid reductoisomerase (NADP(+)).